The chain runs to 383 residues: Trichodiene synthase (383 aa).

The protein belongs to the trichodiene synthase family.

It carries out the reaction (2E,6E)-farnesyl diphosphate = trichodiene + diphosphate. It participates in sesquiterpene biosynthesis; trichothecene biosynthesis. In terms of biological role, TS is a member of the terpene cyclase group of enzymes. It catalyzes the isomerization and cyclization of farnesyl pyro-phosphate to form trichodiene, the first cyclic intermediate in the biosynthetic pathway for trichothecenes. It serves to branch trichothecene biosynthesis from the isoprenoid pathway. This chain is Trichodiene synthase (TRI5), found in Gibberella pulicaris.